We begin with the raw amino-acid sequence, 419 residues long: Hyaluronan synthase (419 aa).

Helical transmembrane passes span 8-28 (LIVLSFICLISILIYLNMYLF), 33-53 (VGIYGVILITYLVIKLGLSFL), 318-338 (IVALWTIFEVVMFMMLIVAIG), 345-365 (AIQLDLIKLFAFLSIIFIVAL), and 376-396 (PASFLLSPLYGILHLFVLQPL).

It belongs to the NodC/HAS family. Mg(2+) is required as a cofactor.

It localises to the cell membrane. It catalyses the reaction [hyaluronan](n) + UDP-N-acetyl-alpha-D-glucosamine = N-acetyl-beta-D-glucosaminyl-(1-&gt;4)-[hyaluronan](n) + UDP + H(+). The catalysed reaction is N-acetyl-beta-D-glucosaminyl-(1-&gt;4)-[hyaluronan](n) + UDP-alpha-D-glucuronate = [hyaluronan](n+1) + UDP + H(+). It functions in the pathway glycan biosynthesis; hyaluronan biosynthesis. In terms of biological role, glycosaminoglycan synthesis. The hyaluronic acid capsule is involved in the pathogenicity of group A Streptococci; it may be the major virulence determinant. This Streptococcus pyogenes serotype M3 (strain ATCC BAA-595 / MGAS315) protein is Hyaluronan synthase (hasA).